The sequence spans 473 residues: Mannose-1-phosphate guanylyltransferase (473 aa).

This sequence belongs to the mannose-6-phosphate isomerase type 2 family. In terms of assembly, homodimer.

It catalyses the reaction alpha-D-mannose 1-phosphate + GTP + H(+) = GDP-alpha-D-mannose + diphosphate. It functions in the pathway nucleotide-sugar biosynthesis; GDP-alpha-D-mannose biosynthesis; GDP-alpha-D-mannose from alpha-D-mannose 1-phosphate (GTP route): step 1/1. The protein operates within bacterial outer membrane biogenesis; LPS O-antigen biosynthesis. Functionally, involved in GDP-mannose biosynthesis which serves as the activated sugar nucleotide precursor for mannose residues in cell surface polysaccharides. This enzyme participates in synthesis of the LPS group C2 O antigen. This is Mannose-1-phosphate guanylyltransferase (rfbM) from Salmonella muenchen.